The sequence spans 208 residues: MKNFLQQINSYIKEAFNAGKYLYNGFSVTFDHLRRRPVTVQYPYEKLIPSERYRGRIHYEFDKCIACEVCVRVCPINLPVVDWVMNKETKKKELRNYSIDFGVCIFCGNCVEYCPTNCLSMTEEYELATFDRHNLNFDNVALGRLPTNVTTDPSVKPLRELAYLPKGVMDPHEVPSSDTRVGKLPEEVYDWMRSESNEKKDKASNPNN.

4Fe-4S ferredoxin-type domains are found at residues 55-84 (GRIH…VDWV) and 95-124 (RNYS…MTEE). Residues cysteine 64, cysteine 67, cysteine 70, cysteine 74, cysteine 104, cysteine 107, cysteine 110, and cysteine 114 each coordinate [4Fe-4S] cluster.

It belongs to the complex I 23 kDa subunit family. In terms of assembly, NDH-1 is composed of at least 11 different subunits. Requires [4Fe-4S] cluster as cofactor.

The protein localises to the cellular thylakoid membrane. It catalyses the reaction a plastoquinone + NADH + (n+1) H(+)(in) = a plastoquinol + NAD(+) + n H(+)(out). The enzyme catalyses a plastoquinone + NADPH + (n+1) H(+)(in) = a plastoquinol + NADP(+) + n H(+)(out). In terms of biological role, NDH-1 shuttles electrons from an unknown electron donor, via FMN and iron-sulfur (Fe-S) centers, to quinones in the respiratory and/or the photosynthetic chain. The immediate electron acceptor for the enzyme in this species is believed to be plastoquinone. Couples the redox reaction to proton translocation, and thus conserves the redox energy in a proton gradient. The chain is NAD(P)H-quinone oxidoreductase subunit I from Prochlorococcus marinus (strain MIT 9301).